The sequence spans 451 residues: MADSMETHKFKVIIVGGSIAGLTLAHSLSKANIDHIVIEKRAEIAPQEGAFIGVWPNGAQILDQLGLYQSLEELTAPISRMHLSFPDDYSFSSFLPKTIHERFKYPIVSLDRQKVLEILFQNYPDKSNIITNQRVSEVRLLGDSASVVTEDGSVFRGDLIVGADGVHSPLTVEYACVFGISRPIPGLRSGEHINHYGDKFCVITFHGKDGRVFWFIIQKLDRVYTYPNAPRYSPNDAADLCGKMQNVVIWQDITVGDLWKTKVVASMTALEEGIFETWSLNRIVILGDSVHKMTPNIGQGANTAIEDVAVLASLINRMIHADDLNKPSESCIETMLQEYKSLRYEPAKSTYQRSRFGARFHTRDSWLKAVVGRYVFQYVGGLIENRTIKTLAGGDTIDFLPRPDRLETGRVAQFQKSEESPQRQWTLLWVSSLALFLFFPWLGSYLHSTIS.

3 residues coordinate FAD: Glu39, Gly53, and Arg112. Tyr196 is a catalytic residue. Residues Asp288 and Ala301 each coordinate FAD. The N-linked (GlcNAc...) asparagine glycan is linked to Asn385. A helical membrane pass occupies residues 426 to 446 (TLLWVSSLALFLFFPWLGSYL).

This sequence belongs to the paxM FAD-dependent monooxygenase family. FAD is required as a cofactor.

The protein localises to the membrane. It participates in secondary metabolite biosynthesis; terpenoid biosynthesis. In terms of biological role, FAD-dependent monooxygenase; part of the gene cluster that mediates the biosynthesis of andrastins, meroterpenoid compounds that exhibit inhibitory activity against ras farnesyltransferase, suggesting that they could be promising leads for antitumor agents. The first step of the pathway is the synthesis of 3,5-dimethylorsellinic acid (DMOA) by the polyketide synthase adrD via condensation of one acetyl-CoA starter unit with 3 malonyl-CoA units and 2 methylations. DMAO is then converted to farnesyl-DMAO by the prenyltransferase adrG. The methyltransferase adrK catalyzes the methylation of the carboxyl group of farnesyl-DMAO to farnesyl-DMAO methyl ester which is further converted to epoxyfarnesyl-DMAO methyl ester by the FAD-dependent monooxygenase adrH. The terpene cyclase adrI then catalyzes the carbon skeletal rearrangement to generate the andrastin E, the first compound in the pathway having the andrastin scaffold, with the tetracyclic ring system. The post-cyclization tailoring enzymes adrF, adrE, adrJ, and adrA, are involved in the conversion of andrastin E into andrastin A. The short chain dehydrogenase adrF is responsible for the oxidation of the C-3 a hydroxyl group of andrastin E to yield the corresponding ketone, andrastin D. The ketoreductase adrE stereoselectively reduces the carbonyl moiety to reverse the stereochemistry of the C-3 position to yield andrastin F. The acetyltransferase adrJ is the acetyltransferase that attaches the acetyl group to the C-3 hydroxyl group of andrastin F to yield andrastin C. Finally, the cytochrome P450 monooxygenase adrA catalyzes two sequential oxidation reactions of the C-23 methyl group, to generate the corresponding alcohol andrastin B, and aldehyde andrastin A. This is FAD-dependent monooxygenase adrH from Penicillium rubens (strain ATCC 28089 / DSM 1075 / NRRL 1951 / Wisconsin 54-1255) (Penicillium chrysogenum).